The sequence spans 276 residues: Glutathione S-transferase-like protein ustS (276 aa).

Positions 16–109 constitute a GST N-terminal domain; sequence STLPGTSKSW…HLDETYPDPP (94 aa).

Belongs to the GST superfamily.

The protein operates within mycotoxin biosynthesis. Glutathione S-transferase-like protein; part of the gene cluster that mediates the biosynthesis of the secondary metabolite ustiloxin B, an antimitotic tetrapeptide. First, ustA is processed by the subtilisin-like endoprotease Kex2 that is outside the ustiloxin B gene cluster, at the C-terminal side of Arg-Lys, after transfer to Golgi apparatus through the endoplasmic reticulum (ER). Cleavage by KEX2 generates 16 peptides YAIG-I to YAIG-XVI. To process the precursor peptide further, at least two peptidases are necessary to cleave the N-terminal and C-terminal sides of the Tyr-Ala-Ile-Gly core peptide which serves as backbone for the synthesis of ustiloxin B, through cyclization and modification of the tyrosine with a non-protein coding amino acid, norvaline. One of the two peptidases must be the serine peptidase ustP; and the other pepdidase is probably ustH. Macrocyclization of the core peptide derived from ustA requires the tyrosinase ustQ, as well as the homologous oxidases ustYa and ustYb, and leads to the production of the first cyclization product N-desmethylustiloxin F. For the formation of N-desmethylustiloxin F, three oxidation steps are required, hydroxylation at the benzylic position, hydroxylation at either the aromatic ring of Tyr or beta-position of Ile, and oxidative cyclization. UstQ may catalyze the oxidation of a phenol moiety, whereas the ustYa and ustYb are most likely responsible for the remaining two-step oxidations. N-desmethylustiloxin F is then methylated by ustM to yield ustiloxin F which in turn substrate of the cytochrome P450 monooxygenase ustC which catalyzes the formation of S-deoxyustiloxin H. The flavoprotein monooxygenases ustF1 and ustF2 then participate in the modification of the side chain of S-deoxyustiloxin H, leading to the synthesis of an oxime intermediate, via ustiloxin H. Finally, carboxylative dehydration performed by the cysteine desulfurase-like protein ustD yields ustiloxin B. This is Glutathione S-transferase-like protein ustS from Aspergillus flavus (strain ATCC 200026 / FGSC A1120 / IAM 13836 / NRRL 3357 / JCM 12722 / SRRC 167).